The chain runs to 237 residues: Ribosomal RNA small subunit methyltransferase G (237 aa).

S-adenosyl-L-methionine contacts are provided by residues G78, F83, 129-130 (AE), and R148.

Belongs to the methyltransferase superfamily. RNA methyltransferase RsmG family.

Its subcellular location is the cytoplasm. In terms of biological role, specifically methylates the N7 position of a guanine in 16S rRNA. The polypeptide is Ribosomal RNA small subunit methyltransferase G (Streptococcus pyogenes serotype M3 (strain ATCC BAA-595 / MGAS315)).